Reading from the N-terminus, the 498-residue chain is ADP,ATP carrier protein 1 (498 aa).

The Cytoplasmic segment spans residues 1-33; that stretch reads MSTSKSENYLSELRKIIWPIEQHENKKFLPLAF. Residues 34 to 54 traverse the membrane as a helical segment; it reads MMFCILLNYSTLRSIKDGFVV. Cysteine 37 and cysteine 85 form a disulfide bridge. The Extracellular segment spans residues 55–67; sequence TDIGTESISFLKT. Residues 68-88 form a helical membrane-spanning segment; the sequence is YIVLPSAVIAMVIYVKLCDIL. Over 89-92 the chain is Cytoplasmic; sequence KQEN. Residues 93–113 form a helical membrane-spanning segment; the sequence is IFYVITSFFLGYFALFAFVLY. Residues 114-147 lie on the Extracellular side of the membrane; sequence PYPDLVHPDHKTIESLSLAYPNFKWFIKIVGKWS. Residues 148-168 traverse the membrane as a helical segment; that stretch reads FASFYTIAELWGTMMLSLLFW. Residues 169 to 184 are Cytoplasmic-facing; sequence QFANQITKITEAKRFY. A helical transmembrane segment spans residues 185–205; it reads SMFGLLANLALPVTSVVIGYF. At 206–218 the chain is on the extracellular side; sequence LHEKTQIVSEHLK. Residues 219–239 traverse the membrane as a helical segment; the sequence is FIPLFVIMITSSFLIILTYRW. Over 240-279 the chain is Cytoplasmic; sequence MNKNVLTDPRLYDPTLVKEKKAKAKLSFIESFKMIFTSKY. Residues 280–300 form a helical membrane-spanning segment; sequence VGYIALLIIAYGVSVNLVEGV. Over 301–320 the chain is Extracellular; the sequence is WKSKVKELYPTKEAYTIYMG. The chain crosses the membrane as a helical span at residues 321–341; the sequence is QFQFYQGWVAIAFMLIGSNIL. Over 342–348 the chain is Cytoplasmic; sequence RKVSWLT. Residues 349 to 369 traverse the membrane as a helical segment; that stretch reads AAMITPLMMFITGAAFFSFIF. Residues 370–379 lie on the Extracellular side of the membrane; the sequence is FDSVIAMNLT. The chain crosses the membrane as a helical span at residues 380–400; sequence GILASSPLTLAVMFGMIQNVL. Residues 401–438 lie on the Cytoplasmic side of the membrane; it reads SKGVKYSLFDATKNMAYIPLDKDLRVKGQAAVEVIGGR. 436-442 is a binding site for ATP; it reads GGRLGKS. A helical transmembrane segment spans residues 439–459; it reads LGKSGGAIIQSTFFILFPAFG. At 460-465 the chain is on the extracellular side; it reads FIEATP. A helical membrane pass occupies residues 466-486; sequence YFASIFFIIVILWIFAVKGLN. The Cytoplasmic segment spans residues 487–498; that stretch reads KEYQVLVNKNEN.

Belongs to the ADP/ATP translocase tlc family.

It localises to the cell membrane. Functionally, provides the rickettsial cell with host ATP in exchange for rickettsial ADP. This is an obligate exchange system. This energy acquiring activity is an important component of rickettsial parasitism. This Rickettsia typhi (strain ATCC VR-144 / Wilmington) protein is ADP,ATP carrier protein 1 (tlcA).